The primary structure comprises 238 residues: MSKAAPAKKPVAVAPAPGCTLDINDPQVQSAAIRIQASYRGHRSRKELREKGPPRVLEPLKDVVLIEGSAAKLTCRISAFPDPFIRWSKDGKELRDGPKYRYVFEDPDVVALVVRDGELADLGQYSINVTNPFGQCSDSARILVEVPTKIQKGPDNTKARKGTTVTLTAEILGEPAPDVGWTKDGEDIEEDDRVFFEIGSTTTTLTIRRATPQDSGKYEVYVENSLGMDQSFARVDVA.

An IQ domain is found at 29 to 55 (QSAAIRIQASYRGHRSRKELREKGPPR). Ig-like domains lie at 54-143 (PRVL…ARIL) and 147-236 (PTKI…ARVD).

The sequence is that of SPEG neighbor protein from Homo sapiens (Human).